We begin with the raw amino-acid sequence, 34 residues long: Small ribosomal subunit protein uS2c (34 aa).

The protein belongs to the universal ribosomal protein uS2 family.

It is found in the plastid. It localises to the chloroplast. This is Small ribosomal subunit protein uS2c (rps2) from Ochrosphaera neapolitana.